The sequence spans 100 residues: Small ribosomal subunit protein uS14c (100 aa).

Belongs to the universal ribosomal protein uS14 family. As to quaternary structure, part of the 30S ribosomal subunit.

Its subcellular location is the plastid. Its function is as follows. Binds 16S rRNA, required for the assembly of 30S particles. The chain is Small ribosomal subunit protein uS14c (rps14) from Cuscuta reflexa (Southern Asian dodder).